A 101-amino-acid polypeptide reads, in one-letter code: Putative pterin-4-alpha-carbinolamine dehydratase (101 aa).

This sequence belongs to the pterin-4-alpha-carbinolamine dehydratase family.

It catalyses the reaction (4aS,6R)-4a-hydroxy-L-erythro-5,6,7,8-tetrahydrobiopterin = (6R)-L-erythro-6,7-dihydrobiopterin + H2O. This chain is Putative pterin-4-alpha-carbinolamine dehydratase, found in Rhizobium johnstonii (strain DSM 114642 / LMG 32736 / 3841) (Rhizobium leguminosarum bv. viciae).